A 155-amino-acid polypeptide reads, in one-letter code: Leader peptidase HopD (155 aa).

This sequence belongs to the peptidase A24 family.

This chain is Leader peptidase HopD (hopD), found in Escherichia coli.